The chain runs to 721 residues: MNLQDELDELKIYMTIDKTTIQELNRCMAEKREEQLFRHHEDAGVKKSTPEKNEKAISEQTLEKVIELENRLKSFEKNSRKLKEESKKLKKENDFLKSHLQHYQEDSESRGKELEKLLRVSSSVEQDKSELQTKVTALEREVTTLRRQVAKAKALRDENEEVVNPEEKEHCPTDKAKSEMATTDVRAQHCDCKTTTTKVKFKAAKKKCSVGRHHTVLNHSIKVMSHVENLSKDGWEDMSEGSSDSETQTFQNLGTVIVETSQNIRPIENDGNQKETDQTEDSRAQQEVQTYSCEDLKAPQNTKKMTFQNKSGSLQKNLHSALPARVNREKCKTKPAQKSSSNTILLRERIVSLQQQNSLLQNARKAAESSAKEFKEANEKLLHQQQISDHRFQTSRQTIKLTLDLAELRKEKEDLLKKVESSSDITSLAEEVSRIMAPQIQVTTLGPSRSTDLEIKQLQCKLKNATNELTKQSSSVKSLKLELLAKDDHMKAMQEKMSRMERDITMKRHLIEDLKFRQKINSESNESFNEMLGTLEKKDLKMNLLISKLNDTETAMAQIKSAASEQLQGLALQSEQVLEGTQKKLLLANEKIEEFTVFVQALVNELQSDAHRTRQQVRELRQTQKSRHACKTSTHKAQTLAASILNISRSDLEEILHTGDEMEIEKTKIDAENDKDWMLYIQKLLQGQLPFASYLLEAVLGKIKENKKLTEGYFTVMKDIK.

The stretch at 52–164 forms a coiled coil; the sequence is KNEKAISEQT…LRDENEEVVN (113 aa). Disordered stretches follow at residues 156 to 180 and 259 to 288; these read RDENEEVVNPEEKEHCPTDKAKSEM and ETSQNIRPIENDGNQKETDQTEDSRAQQEV. Basic and acidic residues-rich tracts occupy residues 165 to 178 and 267 to 284; these read PEEKEHCPTDKAKS and IENDGNQKETDQTEDSRA. Coiled coils occupy residues 345–515 and 573–626; these read LLRE…EDLK and QSEQ…TQKS. Residue Thr658 is modified to Phosphothreonine.

Interacts with CEP250 and CEP68. Interacts with NEK2; the interaction leads to phosphorylation of CNTLN. Phosphorylated directly or indirectly by NEK2.

The protein resides in the cytoplasm. It localises to the cytoskeleton. The protein localises to the microtubule organizing center. Its subcellular location is the centrosome. It is found in the centriole. Its function is as follows. Required for centrosome cohesion and recruitment of CEP68 to centrosomes. The protein is Centlein of Rattus norvegicus (Rat).